We begin with the raw amino-acid sequence, 701 residues long: MTEITAEGNASTTTTVIDSKNGSVPKSPGKVLKRTVTEDIVTTFSSPAAWLLVIALIITWSAVAVVMFDLVDYKNFSASSLSKIGSDPLKLVHDAVEETTDWVYGFFSLLSDIISSDGDEDDDDGDEDTDKGEIEEPPLKQKEIHKEKAEKEEKPERKILAKVAHREKEKVKEKEKSEKKATHKEKIEKKEKPETKTMAKEERKAKTEEKIKKEVKGGKQEKVKPTAAKVKEVQKTPPKAKEKEGKETAAVAKHEQKDQYAFCRYMIDMFVHGDLRPGQSPALPPPLPTVQASRPTPASPTLEGKEEEEKKKAEKKVTSETKKKEKEDVKKKSDKDTAIDVEKKEPGKAPETKQGTIKVVAQAAAKKDEKKEDSKKTKTPVEEHPKGKKQEKKEKYVEPAKSSKKEHSAPSEKQVKAKTERAKEETSAASTKKAVPGKKEEKTTKTVEQEIRKEKSGKTSTASKDKEPEIKKDEKMPKADKEVKPKPPQSQVKKEEKSESQVKKEAKPEQDIAKPEKTVSHGKPEEKVVKQVKATEKAAIEKTVKPKPAKKAEHQEKESPTIKTDKPKPTSKETPEVTESGKKKIEKSEKESKEKAEMKHLKEEKVSTRKESLQSHNVTKAEKPARVSREDLEDVSASKKAKEEAEDVSSTKRQKSPISFFQCVYLDGYNGYGFQFPVTPAYRPGESSGQPSSPGQKQQGQ.

The tract at residues 1–28 (MTEITAEGNASTTTTVIDSKNGSVPKSP) is disordered. At 1-47 (MTEITAEGNASTTTTVIDSKNGSVPKSPGKVLKRTVTEDIVTTFSSP) the chain is on the cytoplasmic side. Over residues 8 to 24 (GNASTTTTVIDSKNGSV) the composition is skewed to polar residues. Residues 48–68 (AAWLLVIALIITWSAVAVVMF) traverse the membrane as a helical segment. Residues 69–701 (DLVDYKNFSA…SSPGQKQQGQ (633 aa)) are Lumenal-facing. N-linked (GlcNAc...) asparagine glycosylation is present at N75. Residues 117–130 (DGDEDDDDGDEDTD) are compositionally biased toward acidic residues. 3 disordered regions span residues 117–256 (DGDE…KHEQ), 273–654 (GDLR…TKRQ), and 676–701 (FPVT…QQGQ). Composition is skewed to basic and acidic residues over residues 131-256 (KGEI…KHEQ), 303-351 (EGKE…KAPE), 365-385 (AKKD…EEHP), 391-426 (EKKE…KEET), 437-485 (GKKE…EVKP), and 492-643 (VKKE…KAKE). N-linked (GlcNAc...) asparagine glycosylation is present at N617. Residues 684 to 701 (PGESSGQPSSPGQKQQGQ) show a composition bias toward low complexity.

As to quaternary structure, homooligomer of variable subunit number; disulfide-linked. Interacts with CASQ1 and RYR1 in skeletal muscle. Interacts with CASQ2. In terms of processing, phosphorylated by CaMK2. Post-translationally, N-glycosylated. Detected in heart (at protein level). Skeletal and cardiac muscle.

It is found in the sarcoplasmic reticulum membrane. Functionally, contributes to the regulation of lumenal Ca2+ release via the sarcoplasmic reticulum calcium release channels RYR1 and RYR2, a key step in triggering skeletal and heart muscle contraction. Required for normal organization of the triad junction, where T-tubules and the sarcoplasmic reticulum terminal cisternae are in close contact. Required for normal skeletal muscle strength. Plays a role in excitation-contraction coupling in the heart and in regulating the rate of heart beats. This chain is Triadin (TRDN), found in Canis lupus familiaris (Dog).